The primary structure comprises 382 residues: Sialidase (382 aa).

R37 lines the substrate pocket. The Proton acceptor role is filled by D62. 3 BNR repeats span residues A71–Y82, I140–N151, and I208–M219. A substrate-binding site is contributed by R245. The stretch at Y255 to I266 is one BNR 4 repeat. Y347 acts as the Nucleophile in catalysis.

It belongs to the glycosyl hydrolase 33 family.

It is found in the secreted. It catalyses the reaction Hydrolysis of alpha-(2-&gt;3)-, alpha-(2-&gt;6)-, alpha-(2-&gt;8)- glycosidic linkages of terminal sialic acid residues in oligosaccharides, glycoproteins, glycolipids, colominic acid and synthetic substrates.. Sialidases have been suggested to be pathogenic factors in microbial infections. The polypeptide is Sialidase (nanH) (Clostridium perfringens).